The primary structure comprises 283 residues: MNNVIDGKALANEILSELKHEVQRLKDKTGESPKLAIVLVGDNPASIIYVKNKIKHANKIGIDTLLLNLPITIKTEDLIAKISELNLDQNVSGIIVQLPLPNSIDKNKILSAISPSKDVDGFHPLNVGYLHSGIDNGFVPCTALGCLEVIKKHEPNLSGKNAIIVGRSNIVGKPLSALLLKENCSVTICHSKSQNLSSITSKADIVVAAIGSPLKLTSGYFKPDAIVIDVGINRIGGNKIVGDVDFENVKSKVKYITPVPGGIGPMTIAFLLKNTVQAFKIYS.

Residues 166–168, serine 191, and isoleucine 232 each bind NADP(+); that span reads GRS.

Belongs to the tetrahydrofolate dehydrogenase/cyclohydrolase family. As to quaternary structure, homodimer.

The enzyme catalyses (6R)-5,10-methylene-5,6,7,8-tetrahydrofolate + NADP(+) = (6R)-5,10-methenyltetrahydrofolate + NADPH. It carries out the reaction (6R)-5,10-methenyltetrahydrofolate + H2O = (6R)-10-formyltetrahydrofolate + H(+). It participates in one-carbon metabolism; tetrahydrofolate interconversion. In terms of biological role, catalyzes the oxidation of 5,10-methylenetetrahydrofolate to 5,10-methenyltetrahydrofolate and then the hydrolysis of 5,10-methenyltetrahydrofolate to 10-formyltetrahydrofolate. This Rickettsia bellii (strain RML369-C) protein is Bifunctional protein FolD.